A 420-amino-acid chain; its full sequence is Putative U-box domain-containing protein 58 (420 aa).

The region spanning 4–168 is the MIF4G domain; sequence NSYVLFARLC…EDALAMKKED (165 aa). Residues 139 to 352 adopt a coiled-coil conformation; the sequence is SRVVELEGNY…TAKEQMEKRQ (214 aa). In terms of domain architecture, U-box spans 352–420; it reads QPPSSFFCPI…ALRSAIEELV (69 aa).

The catalysed reaction is S-ubiquitinyl-[E2 ubiquitin-conjugating enzyme]-L-cysteine + [acceptor protein]-L-lysine = [E2 ubiquitin-conjugating enzyme]-L-cysteine + N(6)-ubiquitinyl-[acceptor protein]-L-lysine.. It participates in protein modification; protein ubiquitination. Functions as an E3 ubiquitin ligase. In Arabidopsis thaliana (Mouse-ear cress), this protein is Putative U-box domain-containing protein 58 (PUB58).